Consider the following 179-residue polypeptide: UPF0316 protein BH0621 (179 aa).

The next 3 membrane-spanning stretches (helical) occupy residues A9–V29, L41–L61, and I67–V87.

This sequence belongs to the UPF0316 family.

Its subcellular location is the cell membrane. This chain is UPF0316 protein BH0621, found in Halalkalibacterium halodurans (strain ATCC BAA-125 / DSM 18197 / FERM 7344 / JCM 9153 / C-125) (Bacillus halodurans).